A 166-amino-acid chain; its full sequence is Peroxynitrite isomerase Rv2717c (166 aa).

The GXWXGXG signature appears at 28-34 (GTWRGQG). The heme b site is built by threonine 40 and histidine 158.

It belongs to the nitrobindin family. In terms of assembly, homodimer. Requires heme b as cofactor.

It is found in the cytoplasm. It catalyses the reaction peroxynitrite = nitrate. It participates in nitrogen metabolism. Functionally, heme-binding protein able to scavenge peroxynitrite and to protect free L-tyrosine against peroxynitrite-mediated nitration, by acting as a peroxynitrite isomerase that converts peroxynitrite to nitrate. Therefore, this protein likely plays a role in peroxynitrite sensing and in the detoxification of reactive nitrogen and oxygen species (RNS and ROS, respectively). Is able to bind nitric oxide (NO) in vitro, but may act as a sensor of peroxynitrite levels in vivo. The sequence is that of Peroxynitrite isomerase Rv2717c from Arabidopsis thaliana (Mouse-ear cress).